The primary structure comprises 470 residues: Siroheme synthase (470 aa).

The segment at 1-203 (MEFFPIFLKL…GDEAAARAEM (203 aa)) is precorrin-2 dehydrogenase /sirohydrochlorin ferrochelatase. NAD(+) is bound by residues 22–23 (EV) and 43–44 (PE). Position 128 is a phosphoserine (serine 128). Residues 216–470 (GAVYLVGAGP…ENSAVTIQED (255 aa)) are uroporphyrinogen-III C-methyltransferase. Residue proline 225 coordinates S-adenosyl-L-methionine. Aspartate 248 (proton acceptor) is an active-site residue. The active-site Proton donor is the lysine 270. S-adenosyl-L-methionine-binding positions include 301–303 (GGD), methionine 383, and alanine 412.

It in the N-terminal section; belongs to the precorrin-2 dehydrogenase / sirohydrochlorin ferrochelatase family. This sequence in the C-terminal section; belongs to the precorrin methyltransferase family.

The catalysed reaction is uroporphyrinogen III + 2 S-adenosyl-L-methionine = precorrin-2 + 2 S-adenosyl-L-homocysteine + H(+). It catalyses the reaction precorrin-2 + NAD(+) = sirohydrochlorin + NADH + 2 H(+). It carries out the reaction siroheme + 2 H(+) = sirohydrochlorin + Fe(2+). It functions in the pathway cofactor biosynthesis; adenosylcobalamin biosynthesis; precorrin-2 from uroporphyrinogen III: step 1/1. The protein operates within cofactor biosynthesis; adenosylcobalamin biosynthesis; sirohydrochlorin from precorrin-2: step 1/1. Its pathway is porphyrin-containing compound metabolism; siroheme biosynthesis; precorrin-2 from uroporphyrinogen III: step 1/1. It participates in porphyrin-containing compound metabolism; siroheme biosynthesis; siroheme from sirohydrochlorin: step 1/1. It functions in the pathway porphyrin-containing compound metabolism; siroheme biosynthesis; sirohydrochlorin from precorrin-2: step 1/1. Multifunctional enzyme that catalyzes the SAM-dependent methylations of uroporphyrinogen III at position C-2 and C-7 to form precorrin-2 via precorrin-1. Then it catalyzes the NAD-dependent ring dehydrogenation of precorrin-2 to yield sirohydrochlorin. Finally, it catalyzes the ferrochelation of sirohydrochlorin to yield siroheme. This Chromobacterium violaceum (strain ATCC 12472 / DSM 30191 / JCM 1249 / CCUG 213 / NBRC 12614 / NCIMB 9131 / NCTC 9757 / MK) protein is Siroheme synthase.